Reading from the N-terminus, the 282-residue chain is MSAIDGLPPLREVIARHDLRAKKQLGQNFLLDLNLTAKIARAAGDLTGCDVIEVGPGPGGLTRGLLAEGARHVLAIEKDARALPALAEIATAYPGRLEVIHGDALEIDPLAHLTPPIRIVANLPYNVGTELLIRWLTPAAWPPFWQSLTLMFQKEVAERIVAQPGGKAYGRLAVLAQWRTEARIVMTLPPEAFVPAPKVHSAVVHLTALPGPRYPADPAVLNRVVAAGFNQRRKMLRASLKGLHPEIEALLIQAGIAPTARAEEIGLEQFCALARGLAAAPR.

The S-adenosyl-L-methionine site is built by asparagine 28, leucine 30, glycine 55, glutamate 77, aspartate 103, and asparagine 122.

It belongs to the class I-like SAM-binding methyltransferase superfamily. rRNA adenine N(6)-methyltransferase family. RsmA subfamily.

The protein localises to the cytoplasm. It catalyses the reaction adenosine(1518)/adenosine(1519) in 16S rRNA + 4 S-adenosyl-L-methionine = N(6)-dimethyladenosine(1518)/N(6)-dimethyladenosine(1519) in 16S rRNA + 4 S-adenosyl-L-homocysteine + 4 H(+). Specifically dimethylates two adjacent adenosines (A1518 and A1519) in the loop of a conserved hairpin near the 3'-end of 16S rRNA in the 30S particle. May play a critical role in biogenesis of 30S subunits. This Paracoccus denitrificans (strain Pd 1222) protein is Ribosomal RNA small subunit methyltransferase A.